The primary structure comprises 375 residues: 4,4'-diaponeurosporenoate glycosyltransferase (375 aa).

The next 4 helical transmembrane spans lie at 3–23 (WLSR…ALIF), 164–184 (FYEG…NVFS), 277–297 (IMAA…GLCL), and 330–350 (FSNL…KIFI).

It belongs to the glycosyltransferase 2 family. CrtQ subfamily.

Its subcellular location is the cell membrane. The protein operates within carotenoid biosynthesis; staphyloxanthin biosynthesis; staphyloxanthin from farnesyl diphosphate: step 4/5. Its function is as follows. Catalyzes the glycosylation of 4,4'-diaponeurosporenoate, i.e. the esterification of glucose at the C1'' position with the carboxyl group of 4,4'-diaponeurosporenic acid, to form glycosyl-4,4'-diaponeurosporenoate. This is a step in the biosynthesis of staphyloxanthin, an orange pigment present in most staphylococci strains. The chain is 4,4'-diaponeurosporenoate glycosyltransferase (crtQ) from Staphylococcus aureus (strain MRSA252).